We begin with the raw amino-acid sequence, 454 residues long: Anthocyanidin 3-O-galactosyltransferase 3GT6 (454 aa).

Positions methionine 1–alanine 21 are cleaved as a signal peptide. Positions 18 and 20 each coordinate an anthocyanidin. Histidine 20 (proton acceptor) is an active-site residue. Aspartate 117 functions as the Charge relay in the catalytic mechanism. Histidine 148 contacts an anthocyanidin. UDP-alpha-D-glucose-binding residues include alanine 331, glutamine 333, histidine 348, tryptophan 351, asparagine 352, serine 353, and glutamate 356. An an anthocyanidin-binding site is contributed by glycine 371. Aspartate 372 contacts UDP-alpha-D-glucose. An N-linked (GlcNAc...) asparagine glycan is attached at asparagine 441.

It belongs to the UDP-glycosyltransferase family. Monomer. Mostly expressed in leaves and flowers and, to a lower extent, in roots. In flowers, mainly observed in petals, stamens and scapes, and at lower levels in pistils and toruses.

It catalyses the reaction cyanidin + UDP-alpha-D-galactose = cyanidin 3-O-beta-D-galactoside + UDP + H(+). The catalysed reaction is cyanidin + UDP-alpha-D-glucose = cyanidin 3-O-beta-D-glucoside + UDP + H(+). It carries out the reaction delphinidin + UDP-alpha-D-glucose = delphinidin 3-O-beta-D-glucoside + UDP. The enzyme catalyses peonidin + UDP-alpha-D-glucose = peonidin 3-O-beta-D-glucoside + UDP. It catalyses the reaction pelargonidin + UDP-alpha-D-glucose = pelargonidin 3-O-beta-D-glucoside + UDP. The catalysed reaction is delphinidin + UDP-alpha-D-galactose = delphinidin 3-O-beta-D-galactoside + UDP + H(+). It carries out the reaction pelargonidin + UDP-alpha-D-galactose = pelargonidin 3-O-beta-D-galactoside betaine + UDP. The enzyme catalyses peonidin + UDP-alpha-D-galactose = peonidin 3-O-beta-D-galactoside + UDP. It catalyses the reaction petunidin + UDP-alpha-D-galactose = petunidin 3-O-beta-D-galactoside + UDP. The catalysed reaction is petunidin + UDP-alpha-D-glucose = petunidin 3-O-beta-D-glucoside + UDP. It carries out the reaction an anthocyanidin + UDP-alpha-D-glucose + H(+) = an anthocyanidin 3-O-beta-D-glucoside + UDP. The enzyme catalyses an anthocyanidin + UDP-alpha-D-galactose = an anthocyanidin 3-O-beta-D-galactoside + UDP. Its pathway is pigment biosynthesis; anthocyanin biosynthesis. Flavonoid 3-O-glycosyltransferase involved in the biosynthesis of anthocyanins conferring flower red/pink colors, mainly anthocyanidin 3-O-glycosides. Catalyzes the addition of UDP-sugar to the 3-OH of anthocyanidin, with a preference for UDP-galactose (UDP-Gal) as sugar donor and cyanidin as substrate; able to use delphinidin, pelargonidin, peonidin and petunidin as substrates in the presence of UDP-Gal, but barely active on malvidin. Can also use UDP-glucose (UDP-Glu) as sugar donor with cyanidin, delphinidin, pelargonidin, peonidin and petunidin as substrates, but not active on malvidin. This chain is Anthocyanidin 3-O-galactosyltransferase 3GT6, found in Rhododendron delavayi (Rhododendron).